Here is a 238-residue protein sequence, read N- to C-terminus: 1-(5-phosphoribosyl)-5-[(5-phosphoribosylamino)methylideneamino] imidazole-4-carboxamide isomerase (238 aa).

The active-site Proton acceptor is D8. The Proton donor role is filled by D127.

The protein belongs to the HisA/HisF family.

The protein resides in the cytoplasm. The enzyme catalyses 1-(5-phospho-beta-D-ribosyl)-5-[(5-phospho-beta-D-ribosylamino)methylideneamino]imidazole-4-carboxamide = 5-[(5-phospho-1-deoxy-D-ribulos-1-ylimino)methylamino]-1-(5-phospho-beta-D-ribosyl)imidazole-4-carboxamide. It participates in amino-acid biosynthesis; L-histidine biosynthesis; L-histidine from 5-phospho-alpha-D-ribose 1-diphosphate: step 4/9. This chain is 1-(5-phosphoribosyl)-5-[(5-phosphoribosylamino)methylideneamino] imidazole-4-carboxamide isomerase, found in Nitratiruptor sp. (strain SB155-2).